The primary structure comprises 550 residues: MDDLFPLIFPSEPAQASGPYVEIIEQPKQRGMRFRYKCEGRSAGSIPGERSTDTTKTHPTIKINGYTGPGTVRISLVTKDPPHRPHPHELVGKDCRDGFYEAELCPDRCIHSFQNLGIQCVKKRDLEQAISQRIQTNNNPFQVPIEEQRGDYDLNAVRLCFQVTVRDPSGRPLRLTPVLSHPIFDNRAPNTAELKICRVNRNSGSCLGGDEIFLLCDKVQKEDIEVYFTGPGWEARGSFSQADVHRQVAIVFRTPPYADPSLQAPVRVSMQLRRPSDRELSEPMEFQYLPDTDDRHRIEEKRKRTYETFKSIMKKSPFNGPTEPRPPPRRIAVPSRGPTSVPKPAPQPYAFSTSLSTINFDEFSPMVLPPGQISNQALALAPSSAPVLAQTMVPSSAMVPSLAQPPAPVPVLAPGPPQSLSAPVPKSTQAGEGTLSEALLHLQFDADEDLGALLGNNTDPGVFTDLASVDNSEFQQLLNQGVAMSHSTAEPMLMEYPEAITRLVTGSQRPPDPAPATLGTSGLPNGLSGDEDFSSIADMDFSALLSQISS.

M1 carries the post-translational modification N-acetylmethionine. In terms of domain architecture, RHD spans 16–190; the sequence is ASGPYVEIIE…HPIFDNRAPN (175 aa). A Glycyl lysine isopeptide (Lys-Gly) (interchain with G-Cter in SUMO3) cross-link involves residue K37. C38 carries the cysteine persulfide; alternate modification. C38 is subject to S-nitrosocysteine; alternate. N6-acetyllysine is present on residues K122, K123, K218, and K221. Residues K122 and K123 each participate in a glycyl lysine isopeptide (Lys-Gly) (interchain with G-Cter in SUMO3); alternate cross-link. Position 254 is a phosphothreonine (T254). Phosphoserine is present on residues S276 and S281. The short motif at 301–304 is the Nuclear localization signal element; sequence KRKR. K310 is modified (N6-acetyllysine; alternate). At K310 the chain carries N6-methyllysine. S311 is modified (phosphoserine). 2 transcriptional activation domain regions span residues 342 to 388 and 414 to 476; these read PKPA…APVL and PGPP…EFQQ. Residue T434 is modified to Phosphothreonine. Phosphoserine is present on S468. T505 bears the Phosphothreonine mark. Residues 520–550 are transcriptional activation domain 2; that stretch reads TSGLPNGLSGDEDFSSIADMDFSALLSQISS. Phosphoserine is present on S535. Residues 535–543 carry the 9aaTAD motif; sequence SIADMDFSA.

Component of the NF-kappa-B p65-p50 complex. Component of the NF-kappa-B p65-c-Rel complex. Homodimer; component of the NF-kappa-B p65-p65 complex. Component of the NF-kappa-B p65-p52 complex. May interact with ETHE1. Binds TLE5 and TLE1. Interacts with TP53BP2. Binds to and is phosphorylated by the activated form of either RPS6KA4 or RPS6KA5. Interacts with ING4 and this interaction may be indirect. Interacts with CARM1, USP48 and UNC5CL. Interacts with IRAK1BP1. Interacts with NFKBID. Interacts with NFKBIA. Interacts with GSK3B. Interacts with NFKBIB. Interacts with NFKBIE. Interacts with NFKBIZ. Interacts with EHMT1 (via ANK repeats). Part of a 70-90 kDa complex at least consisting of CHUK, IKBKB, NFKBIA, RELA, ELP1 and MAP3K14. Interacts with HDAC3; HDAC3 mediates the deacetylation of RELA. Interacts with HDAC1; the interaction requires non-phosphorylated RELA. Interacts with CBP; the interaction requires phosphorylated RELA. Interacts (phosphorylated at 'Thr-254') with PIN1; the interaction inhibits p65 binding to NFKBIA. Interacts with SOCS1. Interacts with UXT. Interacts with MTDH and PHF11. Interacts with ARRB2. Interacts with NFKBIA (when phosphorylated), the interaction is direct; phosphorylated NFKBIA is part of a SCF(BTRC)-like complex lacking CUL1. Interacts with RNF25. Interacts (via C-terminus) with DDX1. Interacts with UFL1 and COMMD1. Interacts with BRMS1; this promotes deacetylation of 'Lys-310'. Interacts with NOTCH2. Directly interacts with MEN1; this interaction represses NFKB-mediated transactivation. Interacts with AKIP1, which promotes the phosphorylation and nuclear retention of RELA. Interacts (via the RHD) with GFI1; the interaction, after bacterial lipopolysaccharide (LPS) stimulation, inhibits the transcriptional activity by interfering with the DNA-binding activity to target gene promoter DNA. Interacts (when acetylated at Lys-310) with BRD4; leading to activation of the NF-kappa-B pathway. Interacts with MEFV. Interacts with CLOCK. Interacts (via N-terminus) with CPEN1; this interaction induces proteolytic cleavage of p65/RELA subunit and inhibition of NF-kappa-B transcriptional activity. Interacts with FOXP3. Interacts with CDK5RAP3; stimulates the interaction of RELA with HDAC1, HDAC2 and HDAC3 thereby inhibiting NF-kappa-B transcriptional activity. Interacts with DHX9; this interaction is direct and activates NF-kappa-B-mediated transcription. Interacts with LRRC25. Interacts with TBX21. Interacts with KAT2A. Interacts with ZBTB7A; involved in the control by RELA of the accessibility of target gene promoters. Directly interacts with DDX3X; this interaction may trap RELA in the cytoplasm, impairing nuclear relocalization upon TNF activating signals. Interacts with PHF2. Interacts with MKRN2; the interaction leads to its polyubiquitination and proteasome-dependent degradation. Interacts with ECSIT. Interacts with RAB28; the interaction contributes to RELA transport from cytoplasm to nucleus. Ubiquitinated by RNF182, leading to its proteasomal degradation. Degradation is required for termination of NF-kappa-B response. Polyubiquitinated via 'Lys-29'-linked ubiquitin; leading to lysosomal degradation. Post-translationally, monomethylated at Lys-310 by SETD6. Monomethylation at Lys-310 is recognized by the ANK repeats of EHMT1 and promotes the formation of repressed chromatin at target genes, leading to down-regulation of NF-kappa-B transcription factor activity. Phosphorylation at Ser-311 disrupts the interaction with EHMT1 without preventing monomethylation at Lys-310 and relieves the repression of target genes. In terms of processing, phosphorylation at Ser-311 disrupts the interaction with EHMT1 and promotes transcription factor activity. Phosphorylation on Ser-535 stimulates acetylation on Lys-310 and interaction with CBP; the phosphorylated and acetylated forms show enhanced transcriptional activity. Phosphorylation at Ser-276 by RPS6KA4 and RPS6KA5 promotes its transactivation and transcriptional activities. Phosphorylation at Ser-75 by herpes simplex virus 1/HHV-1 inhibits NF-kappa-B activation. Post-translationally, reversibly acetylated; the acetylation seems to be mediated by CBP, the deacetylation by HDAC3 and SIRT2. Acetylation at Lys-122 enhances DNA binding and impairs association with NFKBIA. Acetylation at Lys-310 is required for full transcriptional activity in the absence of effects on DNA binding and NFKBIA association. Acetylation at Lys-310 promotes interaction with BRD4. Acetylation can also lower DNA-binding and results in nuclear export. Interaction with BRMS1 promotes deacetylation of Lys-310. Lys-310 is deacetylated by SIRT2. In terms of processing, S-nitrosylation of Cys-38 inactivates the enzyme activity. Sulfhydration at Cys-38 mediates the anti-apoptotic activity by promoting the interaction with RPS3 and activating the transcription factor activity. Post-translationally, sumoylation by PIAS3 negatively regulates DNA-bound activated NF-kappa-B. In terms of processing, proteolytically cleaved within a conserved N-terminus region required for base-specific contact with DNA in a CPEN1-mediated manner, and hence inhibits NF-kappa-B transcriptional activity.

The protein resides in the nucleus. The protein localises to the cytoplasm. In terms of biological role, NF-kappa-B is a pleiotropic transcription factor present in almost all cell types and is the endpoint of a series of signal transduction events that are initiated by a vast array of stimuli related to many biological processes such as inflammation, immunity, differentiation, cell growth, tumorigenesis and apoptosis. NF-kappa-B is a homo- or heterodimeric complex formed by the Rel-like domain-containing proteins RELA/p65, RELB, NFKB1/p105, NFKB1/p50, REL and NFKB2/p52. The heterodimeric RELA-NFKB1 complex appears to be most abundant one. The dimers bind at kappa-B sites in the DNA of their target genes and the individual dimers have distinct preferences for different kappa-B sites that they can bind with distinguishable affinity and specificity. Different dimer combinations act as transcriptional activators or repressors, respectively. The NF-kappa-B heterodimeric RELA-NFKB1 and RELA-REL complexes, for instance, function as transcriptional activators. NF-kappa-B is controlled by various mechanisms of post-translational modification and subcellular compartmentalization as well as by interactions with other cofactors or corepressors. NF-kappa-B complexes are held in the cytoplasm in an inactive state complexed with members of the NF-kappa-B inhibitor (I-kappa-B) family. In a conventional activation pathway, I-kappa-B is phosphorylated by I-kappa-B kinases (IKKs) in response to different activators, subsequently degraded thus liberating the active NF-kappa-B complex which translocates to the nucleus. The inhibitory effect of I-kappa-B on NF-kappa-B through retention in the cytoplasm is exerted primarily through the interaction with RELA. RELA shows a weak DNA-binding site which could contribute directly to DNA binding in the NF-kappa-B complex. Besides its activity as a direct transcriptional activator, it is also able to modulate promoters accessibility to transcription factors and thereby indirectly regulate gene expression. Associates with chromatin at the NF-kappa-B promoter region via association with DDX1. Essential for cytokine gene expression in T-cells. The NF-kappa-B homodimeric RELA-RELA complex appears to be involved in invasin-mediated activation of IL-8 expression. Key transcription factor regulating the IFN response during SARS-CoV-2 infection. The protein is Transcription factor p65 of Rattus norvegicus (Rat).